The sequence spans 354 residues: Protein RecA (354 aa).

65 to 72 (GPESSGKT) provides a ligand contact to ATP.

The protein belongs to the RecA family.

It is found in the cytoplasm. In terms of biological role, can catalyze the hydrolysis of ATP in the presence of single-stranded DNA, the ATP-dependent uptake of single-stranded DNA by duplex DNA, and the ATP-dependent hybridization of homologous single-stranded DNAs. It interacts with LexA causing its activation and leading to its autocatalytic cleavage. This is Protein RecA from Vibrio cholerae serotype O1 (strain ATCC 39315 / El Tor Inaba N16961).